A 241-amino-acid chain; its full sequence is Triosephosphate isomerase (241 aa).

9–11 (NWK) is a substrate binding site. Residue histidine 96 is the Electrophile of the active site. Glutamate 165 acts as the Proton acceptor in catalysis. Residues glycine 171, serine 204, and 225–226 (GG) contribute to the substrate site.

This sequence belongs to the triosephosphate isomerase family. Homodimer.

It localises to the cytoplasm. It carries out the reaction D-glyceraldehyde 3-phosphate = dihydroxyacetone phosphate. It functions in the pathway carbohydrate biosynthesis; gluconeogenesis. The protein operates within carbohydrate degradation; glycolysis; D-glyceraldehyde 3-phosphate from glycerone phosphate: step 1/1. Its function is as follows. Involved in the gluconeogenesis. Catalyzes stereospecifically the conversion of dihydroxyacetone phosphate (DHAP) to D-glyceraldehyde-3-phosphate (G3P). The sequence is that of Triosephosphate isomerase from Picosynechococcus sp. (strain ATCC 27264 / PCC 7002 / PR-6) (Agmenellum quadruplicatum).